Consider the following 306-residue polypeptide: HORMA domain-containing protein 2 (306 aa).

The 204-residue stretch at 29-232 (HESLIMVKKL…TGFHSMKVKV (204 aa)) folds into the HORMA domain.

As to quaternary structure, interacts with HORMAD1. Post-translationally, phosphorylated in a SPO11-dependent manner.

The protein resides in the nucleus. Its subcellular location is the chromosome. In terms of biological role, essential for synapsis surveillance during meiotic prophase via the recruitment of ATR activity. Plays a key role in the male mid-pachytene checkpoint and the female meiotic prophase checkpoint: required for efficient build-up of ATR activity on unsynapsed chromosome regions, a process believed to form the basis of meiotic silencing of unsynapsed chromatin (MSUC) and meiotic prophase quality control in both sexes. Required for the DNA double-strand break-independent, BRCA1-dependent activation of ATR on the sex chromosomes that is essential for normal sex body formation. This Bos taurus (Bovine) protein is HORMA domain-containing protein 2 (HORMAD2).